A 663-amino-acid polypeptide reads, in one-letter code: Rap1 GTPase-activating protein 1 (663 aa).

The region spanning 1-17 is the GoLoco domain; it reads MIEKMQGSRMDEQRCSF. The tract at residues 1-23 is disordered; the sequence is MIEKMQGSRMDEQRCSFPPPLKT. F17 is subject to Phosphoserine. The Rap-GAP domain maps to 181–397; the sequence is IVTFDEHVIS…RTRAALLETL (217 aa). Residue S441 is modified to Phosphoserine. 2 disordered regions span residues 442–604 and 616–645; these read MDAM…PHKR and SVSTTSGGSSPGPSRSPHPDAGKLGDPACP. Positions 450–465 are enriched in polar residues; it reads KKPNTVSTSHSGSFAP. Residues S484, S499, S515, S541, and S542 each carry the phosphoserine modification. Residues 535–549 show a composition bias toward polar residues; sequence ENSSTQSSPEMPTTK. Residues 567-579 are compositionally biased toward low complexity; it reads RSSSSASSFASVV. Residues 580-591 are compositionally biased toward acidic residues; the sequence is EETEGVDGEDTG. Residues 616 to 630 are compositionally biased toward low complexity; it reads SVSTTSGGSSPGPSR.

Homodimer and heterodimer with RAP1B. Significant expression seen in the brain, kidney and pancreas. Abundant in the cerebral cortex and expressed at much lower levels in the spinal cord. Not detected in the lymphoid tissues.

Its subcellular location is the golgi apparatus membrane. In terms of biological role, GTPase activator for the nuclear Ras-related regulatory protein RAP-1A (KREV-1), converting it to the putatively inactive GDP-bound state. This is Rap1 GTPase-activating protein 1 (RAP1GAP) from Homo sapiens (Human).